Here is a 153-residue protein sequence, read N- to C-terminus: Arginine regulator (153 aa).

This sequence belongs to the ArgR family.

It localises to the cytoplasm. It functions in the pathway amino-acid degradation; L-arginine degradation via ADI pathway. Its function is as follows. Regulates the transcription of the arc operon, involved in arginine catabolism. This Lactiplantibacillus plantarum (strain ATCC BAA-793 / NCIMB 8826 / WCFS1) (Lactobacillus plantarum) protein is Arginine regulator (argR1).